The primary structure comprises 840 residues: Phosphatidylglycerol lysyltransferase (840 aa).

Topologically, residues 1–8 (MNQEVKNK) are cytoplasmic. The chain crosses the membrane as a helical span at residues 9–29 (IFSILKITFATALFIFVVITL). Residues 30–52 (YRELSGINFKDTLVEFSKINRMS) are Extracellular-facing. Residues 53-73 (LVLLFIGGGASLVILSMYDVI) traverse the membrane as a helical segment. Residues 74 to 89 (LSRALKMDISLGKVLR) lie on the Cytoplasmic side of the membrane. Residues 90-110 (VSYIINALNAIVGFGGFIGAG) traverse the membrane as a helical segment. Topologically, residues 111-128 (VRAMVYKNYTHDKKKLVH) are extracellular. The helical transmembrane segment at 129–149 (FISLILISMLTGLSLLSLLIV) threads the bilayer. Over 150–161 (FHVFDASLILDK) the chain is Cytoplasmic. Residues 162-182 (ITWVRWVLYVVSFFLPLFIIY) form a helical membrane-spanning segment. At 183–200 (SMVRPPDKNNRFVGLYCT) the chain is on the extracellular side. The helical transmembrane segment at 201–221 (LVSCVEWLAAAVVLYFCGVIV) threads the bilayer. The Cytoplasmic segment spans residues 222–229 (DAHVSFMS). A helical membrane pass occupies residues 230-250 (FIAIFIIAALSGLVSFIPGGF). At 251-271 (GAFDLVVLLGFKTLGVPEEKV) the chain is on the extracellular side. Residues 272–292 (LLMLLLYRFAYYFVPVIIALI) traverse the membrane as a helical segment. Residues 293–337 (LSSFEFGTSAKKYIEGSKYFIPAKDVTSFLMSYQKDIIAKIPSLS) lie on the Cytoplasmic side of the membrane. A helical transmembrane segment spans residues 338–358 (LAILVFFTSMIFFVNNLTIVY). The Extracellular segment spans residues 359 to 369 (DALYDGNHLTY). The chain crosses the membrane as a helical span at residues 370 to 390 (YILLAIHTSACLLLLLNVVGI). Topologically, residues 391–394 (YKQS) are cytoplasmic. 2 helical membrane passes run 395-415 (RRAI…TFFT) and 416-436 (YASY…IVAF). Topologically, residues 437–450 (RRARRLKRPVRMRN) are cytoplasmic. The chain crosses the membrane as a helical span at residues 451-471 (IVAMLLFSLFILYVNHIFIAG). The Extracellular segment spans residues 472-489 (TLYALDIYTIEMHTSVLR). The chain crosses the membrane as a helical span at residues 490–510 (YYFWLTILIIAIIIGMIAWLF). Over 511 to 840 (DYQFSKVRIS…SKVMRVIRHK (330 aa)) the chain is Cytoplasmic.

This sequence belongs to the LPG synthase family.

It localises to the cell membrane. It carries out the reaction L-lysyl-tRNA(Lys) + a 1,2-diacyl-sn-glycero-3-phospho-(1'-sn-glycerol) = a 1,2-diacyl-sn-glycero-3-phospho-1'-(3'-O-L-lysyl)-sn-glycerol + tRNA(Lys). Functionally, catalyzes the transfer of a lysyl group from L-lysyl-tRNA(Lys) to membrane-bound phosphatidylglycerol (PG), which produces lysylphosphatidylglycerol (LPG), a major component of the bacterial membrane with a positive net charge. LPG synthesis contributes to bacterial virulence as it is involved in the resistance mechanism against cationic antimicrobial peptides (CAMP) produces by the host's immune system (defensins, cathelicidins) and by the competing microorganisms (bacteriocins). In fact, the modification of anionic phosphatidylglycerol with positively charged L-lysine results in repulsion of the peptides. In Staphylococcus aureus (strain MSSA476), this protein is Phosphatidylglycerol lysyltransferase (mprF).